Consider the following 79-residue polypeptide: Sec-independent protein translocase protein TatA (79 aa).

A helical transmembrane segment spans residues 1 to 21; the sequence is MGGFTSIWHWVIVLLVIVLLF. Residues 46–79 form a disordered region; it reads DDEEEAKNEPKTLDAQATQTKVHETSEIKSKQES. Residues 66–79 show a composition bias toward basic and acidic residues; that stretch reads KVHETSEIKSKQES.

It belongs to the TatA/E family. In terms of assembly, the Tat system comprises two distinct complexes: a TatABC complex, containing multiple copies of TatA, TatB and TatC subunits, and a separate TatA complex, containing only TatA subunits. Substrates initially bind to the TatABC complex, which probably triggers association of the separate TatA complex to form the active translocon.

It is found in the cell inner membrane. Functionally, part of the twin-arginine translocation (Tat) system that transports large folded proteins containing a characteristic twin-arginine motif in their signal peptide across membranes. TatA could form the protein-conducting channel of the Tat system. The sequence is that of Sec-independent protein translocase protein TatA from Helicobacter pylori (strain HPAG1).